The sequence spans 239 residues: 3,4-dihydroxyphthalate decarboxylase (239 aa).

The Proton donor/acceptor role is filled by glutamate 84. The a divalent metal cation site is built by glutamate 84, histidine 103, histidine 105, and histidine 171.

It belongs to the aldolase class II family. The cofactor is a divalent metal cation.

The enzyme catalyses 3,4-dihydroxyphthalate + H(+) = 3,4-dihydroxybenzoate + CO2. Its pathway is xenobiotic degradation; phthalate degradation. Its function is as follows. Catalyzes the decarboxylation of 3,4-dihydroxyphthalate to protocatechuate (3,4-dihydroxybenzoate) during phthalate metabolism. The chain is 3,4-dihydroxyphthalate decarboxylase from Terrabacter sp. (strain DBF63).